The primary structure comprises 134 residues: UPF0412 protein YaaI (134 aa).

The N-terminal stretch at 1 to 23 (MRSVLTISAGLLFGLALSSVAHA) is a signal peptide.

It belongs to the UPF0412 family.

This chain is UPF0412 protein YaaI, found in Salmonella agona (strain SL483).